The following is a 449-amino-acid chain: uncharacterized protein (449 aa).

In terms of domain architecture, TRAM spans 3 to 61; that stretch reads VWQQGATIELRIDSLSHTGEGVGRWQDRVVFVADTVPGDRLRVRLTHVKRQYAHGKVLE. [4Fe-4S] cluster is bound by residues Cys74, Cys80, Cys83, and Cys161. 4 residues coordinate S-adenosyl-L-methionine: Gln283, Tyr312, Glu333, and Asp378. Catalysis depends on Cys405, which acts as the Nucleophile.

The protein belongs to the class I-like SAM-binding methyltransferase superfamily. RNA M5U methyltransferase family.

This is an uncharacterized protein from Thermosynechococcus vestitus (strain NIES-2133 / IAM M-273 / BP-1).